Consider the following 326-residue polypeptide: N-acetyl-gamma-glutamyl-phosphate reductase (326 aa).

Residue cysteine 155 is part of the active site.

This sequence belongs to the NAGSA dehydrogenase family. Type 1 subfamily.

The protein localises to the cytoplasm. It catalyses the reaction N-acetyl-L-glutamate 5-semialdehyde + phosphate + NADP(+) = N-acetyl-L-glutamyl 5-phosphate + NADPH + H(+). It functions in the pathway amino-acid biosynthesis; L-arginine biosynthesis; N(2)-acetyl-L-ornithine from L-glutamate: step 3/4. Catalyzes the NADPH-dependent reduction of N-acetyl-5-glutamyl phosphate to yield N-acetyl-L-glutamate 5-semialdehyde. In Shewanella baltica (strain OS185), this protein is N-acetyl-gamma-glutamyl-phosphate reductase.